A 140-amino-acid polypeptide reads, in one-letter code: Fluoride-specific ion channel FluC 1 (140 aa).

Transmembrane regions (helical) follow at residues 4–24, 32–52, 70–90, and 99–119; these read LYLA…ASFI, FPLA…FILT, TGML…LHLL, and LLYL…GIFL. Residues Gly-74 and Thr-77 each contribute to the Na(+) site.

It belongs to the fluoride channel Fluc/FEX (TC 1.A.43) family.

It is found in the cell membrane. The catalysed reaction is fluoride(in) = fluoride(out). Na(+) is not transported, but it plays an essential structural role and its presence is essential for fluoride channel function. Functionally, fluoride-specific ion channel. Important for reducing fluoride concentration in the cell, thus reducing its toxicity. In Moorella thermoacetica (strain ATCC 39073 / JCM 9320), this protein is Fluoride-specific ion channel FluC 1.